Reading from the N-terminus, the 360-residue chain is Glutamate 5-kinase (360 aa).

Lysine 7 is a binding site for ATP. Residues serine 47, aspartate 134, and asparagine 146 each contribute to the substrate site. ATP is bound by residues 166–167 and 210–216; these read TD and TGGISTK. A PUA domain is found at 275 to 356; sequence VGKITLDDGA…SSIIVVHRDV (82 aa).

Belongs to the glutamate 5-kinase family.

It is found in the cytoplasm. It carries out the reaction L-glutamate + ATP = L-glutamyl 5-phosphate + ADP. It participates in amino-acid biosynthesis; L-proline biosynthesis; L-glutamate 5-semialdehyde from L-glutamate: step 1/2. Catalyzes the transfer of a phosphate group to glutamate to form L-glutamate 5-phosphate. The polypeptide is Glutamate 5-kinase (Prochlorococcus marinus (strain MIT 9312)).